The chain runs to 211 residues: Mediator of RNA polymerase II transcription subunit 20 (211 aa).

The protein belongs to the Mediator complex subunit 20 family. In terms of assembly, component of the Mediator complex.

It is found in the nucleus. Functionally, component of the Mediator complex, a coactivator involved in the regulated transcription of nearly all RNA polymerase II-dependent genes. Mediator functions as a bridge to convey information from gene-specific regulatory proteins to the basal RNA polymerase II transcription machinery. Mediator is recruited to promoters by direct interactions with regulatory proteins and serves as a scaffold for the assembly of a functional preinitiation complex with RNA polymerase II and the general transcription factors. This is Mediator of RNA polymerase II transcription subunit 20 (med20) from Xenopus laevis (African clawed frog).